The sequence spans 132 residues: Small ribosomal subunit protein eS6 (132 aa).

It belongs to the eukaryotic ribosomal protein eS6 family.

This Methanoculleus marisnigri (strain ATCC 35101 / DSM 1498 / JR1) protein is Small ribosomal subunit protein eS6.